A 202-amino-acid chain; its full sequence is Tumor necrosis factor alpha-induced protein 8-like protein 3 (202 aa).

Residues 1–10 (MDTDSGDLSE) show a composition bias toward acidic residues. The segment at 1–24 (MDTDSGDLSEGELSPGPEQFSSKS) is disordered.

It belongs to the TNFAIP8 family.

It is found in the cytoplasm. It localises to the cell membrane. May act as a lipid transfer protein. This Xenopus laevis (African clawed frog) protein is Tumor necrosis factor alpha-induced protein 8-like protein 3 (tnfaip8l3).